We begin with the raw amino-acid sequence, 345 residues long: Aurora kinase B (345 aa).

The interval 1–25 (MAQKENAYPWPYGSKTSQSGLNTLS) is disordered. Positions 14-25 (SKTSQSGLNTLS) are enriched in polar residues. Position 35 is a phosphothreonine (threonine 35). The disordered stretch occupies residues 50 to 77 (TAAPGQKLAENKSQGSTASQGSQNKQPF). A compositionally biased stretch (polar residues) spans 60 to 77 (NKSQGSTASQGSQNKQPF). Position 62 is a phosphoserine (serine 62). In terms of domain architecture, Protein kinase spans 82 to 332 (FEIGRPLGKG…LAEVAAHPWV (251 aa)). Residues 88 to 96 (LGKGKFGNV) and lysine 111 contribute to the ATP site. Aspartate 205 acts as the Proton acceptor in catalysis. Lysine 220 is subject to N6-acetyllysine. The residue at position 232 (serine 232) is a Phosphoserine. The residue at position 237 (threonine 237) is a Phosphothreonine; by autocatalysis.

Belongs to the protein kinase superfamily. Ser/Thr protein kinase family. Aurora subfamily. As to quaternary structure, component of the chromosomal passenger complex (CPC) composed of at least BIRC5/survivin, CDCA8/borealin, INCENP, AURKB or AURKC; predominantly independent AURKB- and AURKC-containing complexes exist. Associates with RACGAP1 during M phase. Interacts with SPDYC; this interaction may be required for proper localization of active, Thr-237-phosphorylated AURKB form during prometaphase and metaphase. Interacts with p53/TP53. Interacts (via the middle kinase domain) with NOC2L (via the N- and C-terminus domains). Interacts with CDCA1. Interacts with EVI5. Interacts with JTB. Interacts with NDC80. Interacts with PSMA3. Interacts with RNF2/RING1B. Interacts with SEPTIN1. Interacts with SIRT2. Interacts with TACC1. Interacts with TTC28. In terms of processing, the phosphorylation of Thr-237 requires the binding to INCENP and occurs by means of an autophosphorylation mechanism. Thr-237 phosphorylation is indispensable for the AURKB kinase activity. Post-translationally, acetylated at Lys-220 by KAT5 at kinetochores, increasing AURKB activity and promoting accurate chromosome segregation in mitosis. Ubiquitinated by different BCR (BTB-CUL3-RBX1) E3 ubiquitin ligase complexes. Ubiquitinated by the BCR(KLHL9-KLHL13) E3 ubiquitin ligase complex, ubiquitination leads to removal from mitotic chromosomes and is required for cytokinesis. During anaphase, the BCR(KLHL21) E3 ubiquitin ligase complex recruits the CPC complex from chromosomes to the spindle midzone and mediates the ubiquitination of AURKB. Ubiquitination of AURKB by BCR(KLHL21) E3 ubiquitin ligase complex may not lead to its degradation by the proteasome. Deubiquitinated by USP35; inhibiting CDH1-mediated degradation of AURKB. As to expression, expressed in testis, intestine and spleen. All of them are tissues that contain a large number of proliferating cells. Expressed during S phase, in a cell-cycle-dependent fashion.

It is found in the nucleus. Its subcellular location is the chromosome. The protein localises to the centromere. It localises to the kinetochore. The protein resides in the cytoplasm. It is found in the cytoskeleton. Its subcellular location is the spindle. The protein localises to the midbody. It carries out the reaction L-seryl-[protein] + ATP = O-phospho-L-seryl-[protein] + ADP + H(+). The catalysed reaction is L-threonyl-[protein] + ATP = O-phospho-L-threonyl-[protein] + ADP + H(+). Activity is greatly increased when AURKB is within the CPC complex. In particular, AURKB-phosphorylated INCENP acts as an activator of AURKB. Positive feedback between HASPIN and AURKB contributes to CPC localization. In terms of biological role, serine/threonine-protein kinase component of the chromosomal passenger complex (CPC), a complex that acts as a key regulator of mitosis. The CPC complex has essential functions at the centromere in ensuring correct chromosome alignment and segregation and is required for chromatin-induced microtubule stabilization and spindle assembly. Involved in the bipolar attachment of spindle microtubules to kinetochores and is a key regulator for the onset of cytokinesis during mitosis. Required for central/midzone spindle assembly and cleavage furrow formation. Key component of the cytokinesis checkpoint, a process required to delay abscission to prevent both premature resolution of intercellular chromosome bridges and accumulation of DNA damage: phosphorylates CHMP4C, leading to retain abscission-competent VPS4 (VPS4A and/or VPS4B) at the midbody ring until abscission checkpoint signaling is terminated at late cytokinesis. AURKB phosphorylates the CPC complex subunits BIRC5/survivin, CDCA8/borealin and INCENP. Phosphorylation of INCENP leads to increased AURKB activity. Other known AURKB substrates involved in centromeric functions and mitosis are CENPA, DES/desmin, GPAF, KIF2C, NSUN2, RACGAP1, SEPTIN1, VIM/vimentin, HASPIN, and histone H3. A positive feedback loop involving HASPIN and AURKB contributes to localization of CPC to centromeres. Phosphorylation of VIM controls vimentin filament segregation in cytokinetic process, whereas histone H3 is phosphorylated at 'Ser-10' and 'Ser-28' during mitosis (H3S10ph and H3S28ph, respectively). AURKB is also required for kinetochore localization of BUB1 and SGO1. Phosphorylation of p53/TP53 negatively regulates its transcriptional activity. Key regulator of active promoters in resting B- and T-lymphocytes: acts by mediating phosphorylation of H3S28ph at active promoters in resting B-cells, inhibiting RNF2/RING1B-mediated ubiquitination of histone H2A and enhancing binding and activity of the USP16 deubiquitinase at transcribed genes. Acts as an inhibitor of CGAS during mitosis: catalyzes phosphorylation of the N-terminus of CGAS during the G2-M transition, blocking CGAS liquid phase separation and activation, and thereby preventing CGAS-induced autoimmunity. Phosphorylates KRT5 during anaphase and telophase. Phosphorylates ATXN10 which promotes phosphorylation of ATXN10 by PLK1 and may play a role in the regulation of cytokinesis and stimulating the proteasomal degradation of ATXN10. This chain is Aurora kinase B (Aurkb), found in Mus musculus (Mouse).